The sequence spans 132 residues: Small ribosomal subunit protein uS8 (132 aa).

This sequence belongs to the universal ribosomal protein uS8 family. As to quaternary structure, part of the 30S ribosomal subunit. Contacts proteins S5 and S12.

Its function is as follows. One of the primary rRNA binding proteins, it binds directly to 16S rRNA central domain where it helps coordinate assembly of the platform of the 30S subunit. The sequence is that of Small ribosomal subunit protein uS8 from Borreliella afzelii (strain PKo) (Borrelia afzelii).